A 499-amino-acid chain; its full sequence is MGRWGRQSPVLEPPDPQMQTTPPPPTLPPRTFMRQSSITKIGNMLNTAININGAKKPASNGEASWCFSQIKGALDDDVTDADIISCVEFNHDGELLATGDKGGRVVIFQRDPASKAANPRRGEYNVYSTFQSHEPEFDYLKSLEIEEKINKIRWLQQKNPVHFLLSTNDKTVKLWKVSERDKSFGGYNTKEENGLIRDPQNVTALRVPSVKQIPLLVEASPRRTFANAHTYHINSISVNSDQETFLSADDLRINLWHLEVVNQSYNIVDIKPTNMEELTEVITAAEFHPTECNVFVYSSSKGTIRLCDMRSAALCDRHSKQFEEPENPTNRSFFSEIISSISDVKLSNSGRYMISRDYLSIKVWDLHMETKPIETYPVHEYLRAKLCSLYENDCIFDKFECCWNGKDSSIMTGSYNNFFRVFDRNSKKDVTLEASRDIIKPKTVLKPRKVCTGGKRKKDEISVDCLDFNKKILHTAWHPEENIIAVAATNNLFIFQDKF.

The disordered stretch occupies residues Met1–Arg30. Over residues Leu11–Pro28 the composition is skewed to pro residues. 7 WD repeats span residues Thr79 to Asn118, Glu144 to Gly185, Ala228 to Asn266, Glu277 to Arg317, Glu336 to Glu374, Glu391 to Leu432, and Asp467 to Lys498.

Belongs to the phosphatase 2A regulatory subunit B family. As to quaternary structure, PP2A exists in several trimeric forms, all of which consist of a core composed of a catalytic subunit associated with a 65 kDa regulatory subunit (PR65) (subunit A). The core complex associates with a third, variable subunit (subunit B), which confers distinct properties to the holoenzyme.

Could perform a substrate recognition function or could be responsible for targeting the enzyme complex to the appropriate subcellular compartment. The protein is Protein phosphatase PP2A 55 kDa regulatory subunit (tws) of Drosophila melanogaster (Fruit fly).